Consider the following 380-residue polypeptide: PqqA peptide cyclase (380 aa).

Residues 8–223 (VNPPLWLLAE…VADYRQKMAA (216 aa)) enclose the Radical SAM core domain. The [4Fe-4S] cluster site is built by Cys22, Cys26, and Cys29.

The protein belongs to the radical SAM superfamily. PqqE family. As to quaternary structure, interacts with PqqD. The interaction is necessary for activity of PqqE. Requires [4Fe-4S] cluster as cofactor.

The enzyme catalyses [PQQ precursor protein] + S-adenosyl-L-methionine = E-Y cross-linked-[PQQ precursor protein] + 5'-deoxyadenosine + L-methionine + H(+). The protein operates within cofactor biosynthesis; pyrroloquinoline quinone biosynthesis. Functionally, catalyzes the cross-linking of a glutamate residue and a tyrosine residue in the PqqA protein as part of the biosynthesis of pyrroloquinoline quinone (PQQ). The protein is PqqA peptide cyclase of Klebsiella pneumoniae (strain 342).